We begin with the raw amino-acid sequence, 644 residues long: Chaperone protein DnaK (644 aa).

Thr-199 carries the post-translational modification Phosphothreonine; by autocatalysis. The segment at 602–644 (IYAKKSSEGQTAQGQTQSQESTKPAEEGVVDAEFEEVKEEDKK) is disordered. Over residues 609–623 (EGQTAQGQTQSQEST) the composition is skewed to polar residues. Residues 629–644 (GVVDAEFEEVKEEDKK) are compositionally biased toward acidic residues.

This sequence belongs to the heat shock protein 70 family.

In terms of biological role, acts as a chaperone. This Legionella pneumophila (strain Lens) protein is Chaperone protein DnaK.